The sequence spans 357 residues: Trans-enoyl reductase buaC (357 aa).

50 to 53 (VDTK) provides a ligand contact to NADP(+). 135 to 142 (TALVSACM) provides a ligand contact to substrate. NADP(+) is bound by residues 170-173 (STAT), 193-196 (SPKN), Y211, and 258-259 (LN). 278-282 (ATLIT) contributes to the substrate binding site. 347 to 348 (IS) serves as a coordination point for NADP(+).

It belongs to the zinc-containing alcohol dehydrogenase family. In terms of assembly, monomer.

The protein operates within mycotoxin biosynthesis. Functionally, trans-enoyl reductase; part of the gene cluster that mediates the biosynthesis of burnettramic acids, an unusual class of bolaamphiphilic pyrrolizidinediones that display potent antibacterial, antifungal, and cytotoxic activities. The first step of the biosynthesis of burnettramic acids is the hydroxylation of proline by the proline hydroxylase buaE to generate 4-hydroxyproline. The PKS-NRPS buaA and trans-enoyl reductase buaC construct the highly reduced polyketide chain, and the condensation (C) domain of buaA then catalyzes the amide bond formation with the activated 4-hydroxyproline. This is followed by the R domain releasing the nascent polyketide-peptide directly via a Dieckmann condensation to afford a tetramic acid fused to the hydroxyproline, generating the bicyclic pyrrolidinedione moiety. The cytochrome P450 monooxygenases buaD and buaG are likely responsible for the multiple hydroxylations on the polyketide chain and its terminus, although in the heterologous context, buaD does not appear to be required. Therefore, while buaG may be a multifunctional cytochrome P450 monooxygenase, it cannot be ruled out that the two secondary alcohols on the polyketide chain could have an acetate origin. Finally, the glycosyltransferase buaB transfers beta-D-mannose to the aglycone burnettramic acid A to form burnettramic acid A. Burnettramic acid B is a minor cis-pyrrolizidine epimer of burnettramic acid A and it is likely that small amounts of it form naturally in acidic environments. This is Trans-enoyl reductase buaC from Petromyces alliaceus (Aspergillus alliaceus).